The primary structure comprises 184 residues: ATP synthase subunit b, chloroplastic (184 aa).

The chain crosses the membrane as a helical span at residues 27 to 49 (LATNPINLSVVLGVLIFFGKGVL).

Belongs to the ATPase B chain family. F-type ATPases have 2 components, F(1) - the catalytic core - and F(0) - the membrane proton channel. F(1) has five subunits: alpha(3), beta(3), gamma(1), delta(1), epsilon(1). F(0) has four main subunits: a(1), b(1), b'(1) and c(10-14). The alpha and beta chains form an alternating ring which encloses part of the gamma chain. F(1) is attached to F(0) by a central stalk formed by the gamma and epsilon chains, while a peripheral stalk is formed by the delta, b and b' chains.

It localises to the plastid. The protein resides in the chloroplast thylakoid membrane. Functionally, f(1)F(0) ATP synthase produces ATP from ADP in the presence of a proton or sodium gradient. F-type ATPases consist of two structural domains, F(1) containing the extramembraneous catalytic core and F(0) containing the membrane proton channel, linked together by a central stalk and a peripheral stalk. During catalysis, ATP synthesis in the catalytic domain of F(1) is coupled via a rotary mechanism of the central stalk subunits to proton translocation. Component of the F(0) channel, it forms part of the peripheral stalk, linking F(1) to F(0). In Oenothera argillicola (Appalachian evening primrose), this protein is ATP synthase subunit b, chloroplastic.